The following is a 422-amino-acid chain: AP-1 complex subunit mu-1-I (422 aa).

The 254-residue stretch at 167 to 420 folds into the MHD domain; it reads KNEVFLDVIE…ITQNGEYEMR (254 aa).

This sequence belongs to the adaptor complexes medium subunit family. As to quaternary structure, adaptor protein complex 1 (AP-1) is a heterotetramer composed of two large adaptins (gamma- and beta'-type subunits), a medium adaptin (mu-type subunit AP47) and a small adaptin (sigma-type subunit AP19). Interacts (via N-terminus) with kvs-4. In terms of tissue distribution, expressed in the cholinergic motor neuron DA9.

The protein localises to the golgi apparatus. It is found in the cytoplasmic vesicle. Its subcellular location is the clathrin-coated vesicle membrane. The protein resides in the cell projection. It localises to the dendrite. Functionally, component of the adaptor complexes which link clathrin to receptors in coated vesicles. Clathrin-associated protein complexes are believed to interact with the cytoplasmic tails of membrane proteins, leading to their selection and concentration. Required for many aspects of development and behavior, including negative regulation of vulval differentiation. Required for the dendritic localization of potassium channel kvs-4 in the cholinergic motor neuron DA9. The polypeptide is AP-1 complex subunit mu-1-I (unc-101) (Caenorhabditis elegans).